We begin with the raw amino-acid sequence, 120 residues long: MASQQGLQERRRQRLRFQLRRKSGGRPRLSVFRSSKHIHAQIIDDAQGRTLASASTLEKTLRDAGKTGADVSAATVIGKLIAERGVAAGVKTVVFDRGSYLYHGRVKALAEAAREGGLSF.

It belongs to the universal ribosomal protein uL18 family. As to quaternary structure, part of the 50S ribosomal subunit; part of the 5S rRNA/L5/L18/L25 subcomplex. Contacts the 5S and 23S rRNAs.

Functionally, this is one of the proteins that bind and probably mediate the attachment of the 5S RNA into the large ribosomal subunit, where it forms part of the central protuberance. The sequence is that of Large ribosomal subunit protein uL18 from Gluconobacter oxydans (strain 621H) (Gluconobacter suboxydans).